Consider the following 181-residue polypeptide: ATP synthase subunit delta (181 aa).

The protein belongs to the ATPase delta chain family. F-type ATPases have 2 components, F(1) - the catalytic core - and F(0) - the membrane proton channel. F(1) has five subunits: alpha(3), beta(3), gamma(1), delta(1), epsilon(1). F(0) has three main subunits: a(1), b(2) and c(10-14). The alpha and beta chains form an alternating ring which encloses part of the gamma chain. F(1) is attached to F(0) by a central stalk formed by the gamma and epsilon chains, while a peripheral stalk is formed by the delta and b chains.

It is found in the cell inner membrane. Functionally, f(1)F(0) ATP synthase produces ATP from ADP in the presence of a proton or sodium gradient. F-type ATPases consist of two structural domains, F(1) containing the extramembraneous catalytic core and F(0) containing the membrane proton channel, linked together by a central stalk and a peripheral stalk. During catalysis, ATP synthesis in the catalytic domain of F(1) is coupled via a rotary mechanism of the central stalk subunits to proton translocation. Its function is as follows. This protein is part of the stalk that links CF(0) to CF(1). It either transmits conformational changes from CF(0) to CF(1) or is implicated in proton conduction. The sequence is that of ATP synthase subunit delta from Mannheimia succiniciproducens (strain KCTC 0769BP / MBEL55E).